The primary structure comprises 448 residues: Adenylyltransferase and sulfurtransferase UBA4 (448 aa).

Residues Gly88, Asp109, 116 to 120 (SNLHR), Lys133, and 177 to 178 (DT) each bind ATP. Positions 219 and 222 each coordinate Zn(2+). Residue Cys236 is the Glycyl thioester intermediate; for adenylyltransferase activity of the active site. Zn(2+) is bound by residues Cys297 and Cys300. The 98-residue stretch at 349 to 446 (QGENSILIDV…WSKEIDSKIP (98 aa)) folds into the Rhodanese domain. Residue Cys405 is the Cysteine persulfide intermediate; for sulfurtransferase activity of the active site.

In the N-terminal section; belongs to the HesA/MoeB/ThiF family. UBA4 subfamily. Zn(2+) serves as cofactor.

The protein resides in the cytoplasm. It localises to the cytosol. It functions in the pathway tRNA modification; 5-methoxycarbonylmethyl-2-thiouridine-tRNA biosynthesis. In terms of biological role, plays a central role in 2-thiolation of mcm(5)S(2)U at tRNA wobble positions of cytosolic tRNA(Lys), tRNA(Glu) and tRNA(Gln). Acts by mediating the C-terminal thiocarboxylation of sulfur carrier URM1. Its N-terminus first activates URM1 as acyl-adenylate (-COAMP), then the persulfide sulfur on the catalytic cysteine is transferred to URM1 to form thiocarboxylation (-COSH) of its C-terminus. The reaction probably involves hydrogen sulfide that is generated from the persulfide intermediate and that acts as a nucleophile towards URM1. Subsequently, a transient disulfide bond is formed. Does not use thiosulfate as sulfur donor; NFS1 probably acting as a sulfur donor for thiocarboxylation reactions. Prior mcm(5) tRNA modification by the elongator complex is required for 2-thiolation. May also be involved in protein urmylation. The polypeptide is Adenylyltransferase and sulfurtransferase UBA4 (Debaryomyces hansenii (strain ATCC 36239 / CBS 767 / BCRC 21394 / JCM 1990 / NBRC 0083 / IGC 2968) (Yeast)).